The following is a 107-amino-acid chain: Large ribosomal subunit protein uL24 (107 aa).

This sequence belongs to the universal ribosomal protein uL24 family. As to quaternary structure, part of the 50S ribosomal subunit.

In terms of biological role, one of two assembly initiator proteins, it binds directly to the 5'-end of the 23S rRNA, where it nucleates assembly of the 50S subunit. Its function is as follows. One of the proteins that surrounds the polypeptide exit tunnel on the outside of the subunit. The protein is Large ribosomal subunit protein uL24 of Gluconacetobacter diazotrophicus (strain ATCC 49037 / DSM 5601 / CCUG 37298 / CIP 103539 / LMG 7603 / PAl5).